A 305-amino-acid chain; its full sequence is Serine/threonine-protein kinase 16 (305 aa).

Gly2 carries the N-myristoyl glycine lipid modification. Residues Cys6 and Cys8 are each lipidated (S-palmitoyl cysteine). The 274-residue stretch at 20-293 folds into the Protein kinase domain; the sequence is YLFVQKLGEG…PVLLSQLEAL (274 aa). Residues 26-34 and Lys49 contribute to the ATP site; that span reads LGEGGFSYV. The active-site Proton acceptor is Asp148. The tract at residues 166 to 202 is activation loop; it reads DLGSMNQACIQVEGSRQALALQDWAAQRCTISYRAPE. Ser197 carries the phosphoserine; by autocatalysis modification. Position 198 is a phosphotyrosine; by autocatalysis (Tyr198).

It belongs to the protein kinase superfamily. Ser/Thr protein kinase family. Monomer. Interacts with DRG1 (via its N-terminal); the interaction phosphorylates DRG1. In terms of processing, mainly autophosphorylated on serine/threonine residues. Also autophosphorylated on Tyr-198. In terms of tissue distribution, expressed in heart, liver, brain, spleen, lung, skeletal muscle, kidney and testis.

It is found in the cytoplasm. Its subcellular location is the perinuclear region. It localises to the membrane. The enzyme catalyses L-seryl-[protein] + ATP = O-phospho-L-seryl-[protein] + ADP + H(+). It carries out the reaction L-threonyl-[protein] + ATP = O-phospho-L-threonyl-[protein] + ADP + H(+). It catalyses the reaction L-tyrosyl-[protein] + ATP = O-phospho-L-tyrosyl-[protein] + ADP + H(+). Functionally, membrane-associated protein kinase that phosphorylates on serine and threonine residues. In vitro substrates include DRG1, ENO1 and EIF4EBP1. Also autophosphorylates. May be involved in secretory vesicle trafficking or intracellular signaling. May have a role in regulating stromal-epithelial interactions that occur during ductal morphogenesis in the mammary gland. May be involved in TGF-beta signaling. Able to autophosphorylate on Tyr residue; it is however unclear whether it has tyrosine-protein kinase toward other proteins. This is Serine/threonine-protein kinase 16 (Stk16) from Rattus norvegicus (Rat).